A 537-amino-acid chain; its full sequence is Ribonuclease III domain-containing protein RNC1, chloroplastic (537 aa).

The N-terminal 51 residues, 1 to 51 (MELCSSSPSSSLLRICSSSAPEISFSSSISQFPSKTQSILTKSRFQNLRIC), are a transit peptide targeting the chloroplast. 2 RNase III domains span residues 141 to 283 (LLEV…LCFG) and 415 to 515 (EHPR…TIYG).

As to quaternary structure, interacts with RNA. Part of large ribonucleo-protein particles that contain CAF1 and/or CAF2.

It localises to the plastid. It is found in the chloroplast. Functionally, binds specific group II introns in chloroplasts and facilitates their splicing. Acts on both subgroup IIA and subgroup IIB introns. The substrates of the subgroup II also require the CRM domain proteins CAF1 or CAF2. Binds both single-stranded and double-stranded RNA non-specifically, but lacks endonuclease activity. Required for plastid ribosome biogenesis. The protein is Ribonuclease III domain-containing protein RNC1, chloroplastic of Arabidopsis thaliana (Mouse-ear cress).